The chain runs to 188 residues: Methylated-DNA--protein-cysteine methyltransferase (188 aa).

DNA is bound by residues Tyr120, Gly121, and Arg134. Catalysis depends on Cys151, which acts as the Nucleophile; methyl group acceptor. Ser157 serves as a coordination point for DNA.

The protein belongs to the MGMT family.

It is found in the nucleus. It catalyses the reaction a 6-O-methyl-2'-deoxyguanosine in DNA + L-cysteinyl-[protein] = S-methyl-L-cysteinyl-[protein] + a 2'-deoxyguanosine in DNA. It carries out the reaction a 4-O-methyl-thymidine in DNA + L-cysteinyl-[protein] = a thymidine in DNA + S-methyl-L-cysteinyl-[protein]. Its function is as follows. Involved in the cellular defense against the biological effects of O6-methylguanine (O6-MeG) and O4-methylthymine (O4-MeT) in DNA. Repairs the methylated nucleobase in DNA by stoichiometrically transferring the methyl group to a cysteine residue in the enzyme. This is a suicide reaction: the enzyme is irreversibly inactivated. Prefers double-stranded DNA over single-stranded DNA as substrate. The sequence is that of Methylated-DNA--protein-cysteine methyltransferase (MGT1) from Saccharomyces cerevisiae (strain YJM789) (Baker's yeast).